The following is a 227-amino-acid chain: Large ribosomal subunit protein uL3 (227 aa).

At Gln151 the chain carries N5-methylglutamine.

It belongs to the universal ribosomal protein uL3 family. In terms of assembly, part of the 50S ribosomal subunit. Forms a cluster with proteins L14 and L19. In terms of processing, methylated by PrmB.

In terms of biological role, one of the primary rRNA binding proteins, it binds directly near the 3'-end of the 23S rRNA, where it nucleates assembly of the 50S subunit. This chain is Large ribosomal subunit protein uL3, found in Gluconacetobacter diazotrophicus (strain ATCC 49037 / DSM 5601 / CCUG 37298 / CIP 103539 / LMG 7603 / PAl5).